Consider the following 241-residue polypeptide: Protein GrpE (241 aa).

Residues 28–49 (QNCQKEETQTTNKDNQKEDETF) show a composition bias toward basic and acidic residues. Residues 28-78 (QNCQKEETQTTNKDNQKEDETFKNQPNKTKQTNTKQQKHLSKESSHQQITK) are disordered. Over residues 50–62 (KNQPNKTKQTNTK) the composition is skewed to low complexity.

It belongs to the GrpE family. In terms of assembly, homodimer.

The protein localises to the cytoplasm. In terms of biological role, participates actively in the response to hyperosmotic and heat shock by preventing the aggregation of stress-denatured proteins, in association with DnaK and GrpE. It is the nucleotide exchange factor for DnaK and may function as a thermosensor. Unfolded proteins bind initially to DnaJ; upon interaction with the DnaJ-bound protein, DnaK hydrolyzes its bound ATP, resulting in the formation of a stable complex. GrpE releases ADP from DnaK; ATP binding to DnaK triggers the release of the substrate protein, thus completing the reaction cycle. Several rounds of ATP-dependent interactions between DnaJ, DnaK and GrpE are required for fully efficient folding. This Aster yellows witches'-broom phytoplasma (strain AYWB) protein is Protein GrpE.